A 547-amino-acid chain; its full sequence is MNKLIRRAVTIFAVTSVASLFASGVLETSMAESLSTNVISLADTKAKDNTSHKSKKARKNHSKETPVDRKEVAPVHESKATGPKQDSCFGRMYTVKVNDDRNVEITQAVPEYATVGSPYPIEITATGKRDCVDVIITQQLPCEAEFVRSDPATTPTADGKLVWKIDRLGQGEKSKITVWVKPLKEGCCFTAATVCACPEIRSVTKCGQPAICVKQEGPENACLRCPVVYKINIVNQGTATARNVVVENPVPDGYAHSSGQRVLTFTLGDMQPGEHRTITVEFCPLKRGRATNIATVSYCGGHKNTASVTTVINEPCVQVSIAGADWSYVCKPVEYVISVSNPGDLVLRDVVVEDTLSPGVTVLEAAGAQISCNKVVWTVKELNPGESLQYKVLVRAQTPGQFTNNVVVKSCSDCGTCTSCAEATTYWKGVAATHMCVVDTCDPVCVGENTVYRICVTNRGSAEDTNVSLMLKFSKELQPVSFSGPTKGTITGNTVVFDSLPRLGSKETVEFSVTLKAVSAGDARGEAILSSDTLTVPVSDTENTHIY.

The signal sequence occupies residues 1–22; it reads MNKLIRRAVTIFAVTSVASLFA. Positions 23-40 are excised as a propeptide; sequence SGVLETSMAESLSTNVIS. Positions 45-84 are disordered; that stretch reads KAKDNTSHKSKKARKNHSKETPVDRKEVAPVHESKATGPK. The span at 52 to 61 shows a compositional bias: basic residues; the sequence is HKSKKARKNH. Basic and acidic residues predominate over residues 62 to 79; the sequence is SKETPVDRKEVAPVHESK.

In terms of assembly, part of a disulfide cross-linked outer membrane complex (COMC) composed of the major outer membrane porin (MOMP), the small cysteine-rich protein (OmcA) and the large cysteine-rich periplasmic protein (OmcB).

The protein resides in the periplasm. Functionally, in elementary bodies (EBs, the infectious stage, which is able to survive outside the host cell) provides the structural integrity of the outer envelope through disulfide cross-links with the small cysteine-rich protein and the major outer membrane protein. It has been described in publications as the Sarkosyl-insoluble COMC (Chlamydia outer membrane complex), and serves as the functional equivalent of peptidoglycan. The sequence is that of Large cysteine-rich periplasmic protein OmcB (omcB) from Chlamydia trachomatis serovar D (strain ATCC VR-885 / DSM 19411 / UW-3/Cx).